Reading from the N-terminus, the 164-residue chain is Protein-export protein SecB (164 aa).

Belongs to the SecB family. In terms of assembly, homotetramer, a dimer of dimers. One homotetramer interacts with 1 SecA dimer.

It is found in the cytoplasm. One of the proteins required for the normal export of preproteins out of the cell cytoplasm. It is a molecular chaperone that binds to a subset of precursor proteins, maintaining them in a translocation-competent state. It also specifically binds to its receptor SecA. The protein is Protein-export protein SecB of Orientia tsutsugamushi (strain Ikeda) (Rickettsia tsutsugamushi).